A 95-amino-acid chain; its full sequence is Integration host factor subunit beta (95 aa).

Positions 56 to 76 (RAPRTGRNPKTGTSVELDGKY) are disordered.

It belongs to the bacterial histone-like protein family. As to quaternary structure, heterodimer of an alpha and a beta chain.

In terms of biological role, this protein is one of the two subunits of integration host factor, a specific DNA-binding protein that functions in genetic recombination as well as in transcriptional and translational control. This is Integration host factor subunit beta from Shewanella woodyi (strain ATCC 51908 / MS32).